An 85-amino-acid polypeptide reads, in one-letter code: Beta-insect depressant toxin Lqh-dprIT3d (85 aa).

An N-terminal signal peptide occupies residues 1-21 (MKLLLLLTISASMLIEGLVNA). The 61-residue stretch at 22–82 (DGYIRGGDGC…EWDYETNTCG (61 aa)) folds into the LCN-type CS-alpha/beta domain. Disulfide bonds link cysteine 31/cysteine 81, cysteine 35/cysteine 56, cysteine 42/cysteine 63, and cysteine 46/cysteine 65. Glycine amide is present on glycine 82.

The protein belongs to the long (4 C-C) scorpion toxin superfamily. Sodium channel inhibitor family. Beta subfamily. Expressed by the venom gland.

The protein resides in the secreted. In terms of biological role, depressant insect beta-toxins cause a transient contraction paralysis followed by a slow flaccid paralysis. They bind voltage-independently at site-4 of sodium channels (Nav) and block action potentials, primarily by depolarizing the axonal membrane and suppressing the sodium current. This depressant toxin is active only on insects. It is found in a relatively small amount in the venom, and its activity on insects is 10-fold higher compared to other known depressant toxins. The protein is Beta-insect depressant toxin Lqh-dprIT3d of Leiurus hebraeus (Hebrew deathstalker scorpion).